We begin with the raw amino-acid sequence, 504 residues long: Putative BTB/POZ domain-containing protein R842 (504 aa).

Residues 21–91 (SDVKLILKDN…FYGFKSPSVT (71 aa)) form the BTB domain.

This sequence belongs to the mimivirus BTB/WD family.

This is Putative BTB/POZ domain-containing protein R842 from Acanthamoeba polyphaga (Amoeba).